The following is a 610-amino-acid chain: Glutamine--fructose-6-phosphate aminotransferase [isomerizing] (610 aa).

Catalysis depends on Cys-2, which acts as the Nucleophile; for GATase activity. A Glutamine amidotransferase type-2 domain is found at 2 to 221 (CGIVGAVAQR…DGDVVDLQLA (220 aa)). 2 SIS domains span residues 286 to 426 (AYKV…TRGR) and 459 to 600 (WADR…VDKP). Residue Lys-605 is the For Fru-6P isomerization activity of the active site.

As to quaternary structure, homodimer.

The protein localises to the cytoplasm. The enzyme catalyses D-fructose 6-phosphate + L-glutamine = D-glucosamine 6-phosphate + L-glutamate. In terms of biological role, catalyzes the first step in hexosamine metabolism, converting fructose-6P into glucosamine-6P using glutamine as a nitrogen source. The chain is Glutamine--fructose-6-phosphate aminotransferase [isomerizing] from Bordetella pertussis (strain Tohama I / ATCC BAA-589 / NCTC 13251).